Here is a 150-residue protein sequence, read N- to C-terminus: Ribonuclease H (150 aa).

The 141-residue stretch at Met-1 to Ile-141 folds into the RNase H type-1 domain. Mg(2+) is bound by residues Asp-9, Glu-47, Asp-69, and Asp-133.

It belongs to the RNase H family. As to quaternary structure, monomer. Requires Mg(2+) as cofactor.

It is found in the cytoplasm. It catalyses the reaction Endonucleolytic cleavage to 5'-phosphomonoester.. In terms of biological role, endonuclease that specifically degrades the RNA of RNA-DNA hybrids. The polypeptide is Ribonuclease H (Xanthomonas euvesicatoria pv. vesicatoria (strain 85-10) (Xanthomonas campestris pv. vesicatoria)).